The following is a 67-amino-acid chain: DNA gyrase inhibitor YacG (67 aa).

4 residues coordinate Zn(2+): Cys8, Cys11, Cys27, and Cys31.

Belongs to the DNA gyrase inhibitor YacG family. In terms of assembly, interacts with GyrB. The cofactor is Zn(2+).

Its function is as follows. Inhibits all the catalytic activities of DNA gyrase by preventing its interaction with DNA. Acts by binding directly to the C-terminal domain of GyrB, which probably disrupts DNA binding by the gyrase. This Ralstonia pickettii (strain 12J) protein is DNA gyrase inhibitor YacG.